Reading from the N-terminus, the 429-residue chain is Probable M18 family aminopeptidase 2 (429 aa).

3 residues coordinate Zn(2+): His82, His156, and His401.

It belongs to the peptidase M18 family. Zn(2+) is required as a cofactor.

This Stutzerimonas stutzeri (strain A1501) (Pseudomonas stutzeri) protein is Probable M18 family aminopeptidase 2.